Here is a 361-residue protein sequence, read N- to C-terminus: D-alanine--D-alanine ligase (361 aa).

An ATP-grasp domain is found at 144–350 (KLCVSEAGIA…FPELCDRLLQ (207 aa)). 177-232 (PETLIYPVFVKPAHLGSSVGISKVSVQGELPEALAHACNLDTKVLIEQAMHGKEIE) provides a ligand contact to ATP. Mg(2+)-binding residues include Asp303, Glu317, and Asn319.

The protein belongs to the D-alanine--D-alanine ligase family. It depends on Mg(2+) as a cofactor. Mn(2+) is required as a cofactor.

It is found in the cytoplasm. The catalysed reaction is 2 D-alanine + ATP = D-alanyl-D-alanine + ADP + phosphate + H(+). It participates in cell wall biogenesis; peptidoglycan biosynthesis. Functionally, cell wall formation. The sequence is that of D-alanine--D-alanine ligase from Chlorobium phaeovibrioides (strain DSM 265 / 1930) (Prosthecochloris vibrioformis (strain DSM 265)).